We begin with the raw amino-acid sequence, 70 residues long: Toxin Boma6d (70 aa).

The region spanning 2–68 (RDAYIAQNYN…VPIKVEGKCH (67 aa)) is the LCN-type CS-alpha/beta domain. Intrachain disulfides connect Cys-12–Cys-67, Cys-16–Cys-40, Cys-22–Cys-50, and Cys-26–Cys-52.

It belongs to the long (4 C-C) scorpion toxin superfamily. Sodium channel inhibitor family. Alpha subfamily. In terms of tissue distribution, expressed by the venom gland.

It localises to the secreted. Functionally, alpha toxins bind voltage-independently at site-3 of sodium channels (Nav) and inhibit the inactivation of the activated channels, thereby blocking neuronal transmission. The chain is Toxin Boma6d from Buthus occitanus mardochei (Moroccan scorpion).